We begin with the raw amino-acid sequence, 309 residues long: Ribosomal protein L11 methyltransferase (309 aa).

Positions 152, 178, 200, and 242 each coordinate S-adenosyl-L-methionine.

Belongs to the methyltransferase superfamily. PrmA family.

Its subcellular location is the cytoplasm. The catalysed reaction is L-lysyl-[protein] + 3 S-adenosyl-L-methionine = N(6),N(6),N(6)-trimethyl-L-lysyl-[protein] + 3 S-adenosyl-L-homocysteine + 3 H(+). Functionally, methylates ribosomal protein L11. The protein is Ribosomal protein L11 methyltransferase of Pelobacter propionicus (strain DSM 2379 / NBRC 103807 / OttBd1).